The sequence spans 293 residues: Protease HtpX homolog (293 aa).

2 consecutive transmembrane segments (helical) span residues 4-24 (IFLF…TMRI) and 38-58 (LTGL…ISLL). Zn(2+) is bound at residue H146. The active site involves E147. Residue H150 coordinates Zn(2+). The next 2 membrane-spanning stretches (helical) occupy residues 161 to 181 (LIQG…GYFV) and 198 to 218 (ATVI…VAWF). E223 is a binding site for Zn(2+).

It belongs to the peptidase M48B family. The cofactor is Zn(2+).

It is found in the cell inner membrane. This is Protease HtpX homolog from Bordetella parapertussis (strain 12822 / ATCC BAA-587 / NCTC 13253).